The following is a 356-amino-acid chain: Cytochrome b translation regulator cbp7 (356 aa).

As to quaternary structure, component of a complex, at least composed of cbp7 and cbp8.

It localises to the mitochondrion. Its function is as follows. Translation factor for cob1/cytochrome b; plays a role in cob1 mRNA stabilization and required for correct folding of the protein. This chain is Cytochrome b translation regulator cbp7, found in Schizosaccharomyces pombe (strain 972 / ATCC 24843) (Fission yeast).